Here is a 273-residue protein sequence, read N- to C-terminus: Bis(5'-nucleosyl)-tetraphosphatase, symmetrical (273 aa).

It belongs to the Ap4A hydrolase family.

The enzyme catalyses P(1),P(4)-bis(5'-adenosyl) tetraphosphate + H2O = 2 ADP + 2 H(+). Hydrolyzes diadenosine 5',5'''-P1,P4-tetraphosphate to yield ADP. This Aromatoleum aromaticum (strain DSM 19018 / LMG 30748 / EbN1) (Azoarcus sp. (strain EbN1)) protein is Bis(5'-nucleosyl)-tetraphosphatase, symmetrical.